The chain runs to 486 residues: Aspartyl/glutamyl-tRNA(Asn/Gln) amidotransferase subunit B (486 aa).

It belongs to the GatB/GatE family. GatB subfamily. Heterotrimer of A, B and C subunits.

It carries out the reaction L-glutamyl-tRNA(Gln) + L-glutamine + ATP + H2O = L-glutaminyl-tRNA(Gln) + L-glutamate + ADP + phosphate + H(+). The catalysed reaction is L-aspartyl-tRNA(Asn) + L-glutamine + ATP + H2O = L-asparaginyl-tRNA(Asn) + L-glutamate + ADP + phosphate + 2 H(+). Its function is as follows. Allows the formation of correctly charged Asn-tRNA(Asn) or Gln-tRNA(Gln) through the transamidation of misacylated Asp-tRNA(Asn) or Glu-tRNA(Gln) in organisms which lack either or both of asparaginyl-tRNA or glutaminyl-tRNA synthetases. The reaction takes place in the presence of glutamine and ATP through an activated phospho-Asp-tRNA(Asn) or phospho-Glu-tRNA(Gln). The sequence is that of Aspartyl/glutamyl-tRNA(Asn/Gln) amidotransferase subunit B from Leptospira interrogans serogroup Icterohaemorrhagiae serovar Lai (strain 56601).